The sequence spans 333 residues: Glycerol-3-phosphate dehydrogenase [NAD(P)+] (333 aa).

NADPH is bound by residues S10, W11, H31, R32, and K105. Residues K105, G136, and S138 each coordinate sn-glycerol 3-phosphate. An NADPH-binding site is contributed by A140. Residues K191, D244, S254, R255, and N256 each contribute to the sn-glycerol 3-phosphate site. The active-site Proton acceptor is K191. R255 serves as a coordination point for NADPH. Positions 279 and 281 each coordinate NADPH.

This sequence belongs to the NAD-dependent glycerol-3-phosphate dehydrogenase family.

It localises to the cytoplasm. The catalysed reaction is sn-glycerol 3-phosphate + NAD(+) = dihydroxyacetone phosphate + NADH + H(+). It carries out the reaction sn-glycerol 3-phosphate + NADP(+) = dihydroxyacetone phosphate + NADPH + H(+). The protein operates within membrane lipid metabolism; glycerophospholipid metabolism. Catalyzes the reduction of the glycolytic intermediate dihydroxyacetone phosphate (DHAP) to sn-glycerol 3-phosphate (G3P), the key precursor for phospholipid synthesis. The polypeptide is Glycerol-3-phosphate dehydrogenase [NAD(P)+] (Pelodictyon phaeoclathratiforme (strain DSM 5477 / BU-1)).